The chain runs to 141 residues: Nucleoside diphosphate kinase (141 aa).

Residues Lys-11, Phe-59, Arg-87, Thr-93, Arg-104, and Asn-114 each contribute to the ATP site. Residue His-117 is the Pros-phosphohistidine intermediate of the active site.

Belongs to the NDK family. Homotetramer. Mg(2+) is required as a cofactor.

It localises to the cytoplasm. The enzyme catalyses a 2'-deoxyribonucleoside 5'-diphosphate + ATP = a 2'-deoxyribonucleoside 5'-triphosphate + ADP. It catalyses the reaction a ribonucleoside 5'-diphosphate + ATP = a ribonucleoside 5'-triphosphate + ADP. Major role in the synthesis of nucleoside triphosphates other than ATP. The ATP gamma phosphate is transferred to the NDP beta phosphate via a ping-pong mechanism, using a phosphorylated active-site intermediate. In Polynucleobacter asymbioticus (strain DSM 18221 / CIP 109841 / QLW-P1DMWA-1) (Polynucleobacter necessarius subsp. asymbioticus), this protein is Nucleoside diphosphate kinase.